Reading from the N-terminus, the 428-residue chain is E3 ubiquitin-protein ligase RNF128 (428 aa).

An N-terminal signal peptide occupies residues Met1–Gly38. N-linked (GlcNAc...) asparagine glycans are attached at residues Asn48, Asn59, and Asn101. Residues Ser75–Ile183 form the PA domain. The helical transmembrane segment at Ile208–Phe228 threads the bilayer. An RING-type; atypical zinc finger spans residues Cys277–Lys318. Positions Ile346–Ser428 are disordered. The segment covering Glu360–Gly371 has biased composition (polar residues).

In terms of processing, auto-ubiquitinated. Controls the development of T-cell clonal anergy by ubiquitination.

Its subcellular location is the cytoplasm. The protein resides in the endomembrane system. It localises to the cytoskeleton. The protein localises to the perinuclear region. The catalysed reaction is S-ubiquitinyl-[E2 ubiquitin-conjugating enzyme]-L-cysteine + [acceptor protein]-L-lysine = [E2 ubiquitin-conjugating enzyme]-L-cysteine + N(6)-ubiquitinyl-[acceptor protein]-L-lysine.. Its pathway is protein modification; protein ubiquitination. In terms of biological role, E3 ubiquitin-protein ligase that catalyzes 'Lys-27', 'Lys-48'- or 'Lys-63'-linked polyubiquitin chains formation and plays a role in different biological processes such as modulation of immune response, cytoskeletal dynamics or protein homeostasis. Inhibits IL2 and IL4 transcription, thereby playing an important role in the induction of the anergic phenotype, a long-term stable state of T-lymphocyte unresponsiveness to antigenic stimulation associated with the blockade of interleukin production. Ubiquitinates ARPC5 with 'Lys-48' linkages and COR1A with 'Lys-63' linkages leading to their degradation, down-regulation of these cytoskeletal components results in impaired lamellipodium formation and reduced accumulation of F-actin at the immunological synapse. Functions in the patterning of the dorsal ectoderm; sensitizes ectoderm to respond to neural-inducing signals. Plays a positive role in innate immune response by promoting 'Lys-63'-linked ubiquitination of TBK1 after RNA- or DNA-virus infection. Regulates alveolar macrophage activation and neutrophil infiltration by interacting with TLR4, targeting it for degradation, and inhibiting NF-kappa-B activation, hence decreasing pro-inflammatory cytokines. Negatively regulates the IL-3/STAT5 signaling pathway by facilitating 'Lys-27'-linked polyubiquitination of IL3RA leading to its degradation via lysosomal pathway. Directly regulates the N-glycosylation process in the endoplasmic reticulum by targeting the glycosyl-transferase RPN1 for ubiquitination and degradation. Other substrates targeted for degradation by RNF128 include transmembrane proteins CD40L, CD83 or the tetraspanin CD151. This Homo sapiens (Human) protein is E3 ubiquitin-protein ligase RNF128 (RNF128).